A 130-amino-acid chain; its full sequence is Transcription antitermination protein NusB (130 aa).

It belongs to the NusB family.

Functionally, involved in transcription antitermination. Required for transcription of ribosomal RNA (rRNA) genes. Binds specifically to the boxA antiterminator sequence of the ribosomal RNA (rrn) operons. This Bacillus mycoides (strain KBAB4) (Bacillus weihenstephanensis) protein is Transcription antitermination protein NusB.